The sequence spans 92 residues: N(2)-fixation sustaining protein CowN (92 aa).

It belongs to the CowN family.

Is required to sustain N(2)-dependent growth in the presence of low levels of carbon monoxide (CO). Probably acts by protecting the N(2) fixation ability of the nitrogenase complex, which is inactivated in the presence of CO. The chain is N(2)-fixation sustaining protein CowN from Rhodopseudomonas palustris (strain HaA2).